Here is a 94-residue protein sequence, read N- to C-terminus: Aspartyl/glutamyl-tRNA(Asn/Gln) amidotransferase subunit C (94 aa).

Belongs to the GatC family. As to quaternary structure, heterotrimer of A, B and C subunits.

The catalysed reaction is L-glutamyl-tRNA(Gln) + L-glutamine + ATP + H2O = L-glutaminyl-tRNA(Gln) + L-glutamate + ADP + phosphate + H(+). It catalyses the reaction L-aspartyl-tRNA(Asn) + L-glutamine + ATP + H2O = L-asparaginyl-tRNA(Asn) + L-glutamate + ADP + phosphate + 2 H(+). Its function is as follows. Allows the formation of correctly charged Asn-tRNA(Asn) or Gln-tRNA(Gln) through the transamidation of misacylated Asp-tRNA(Asn) or Glu-tRNA(Gln) in organisms which lack either or both of asparaginyl-tRNA or glutaminyl-tRNA synthetases. The reaction takes place in the presence of glutamine and ATP through an activated phospho-Asp-tRNA(Asn) or phospho-Glu-tRNA(Gln). The polypeptide is Aspartyl/glutamyl-tRNA(Asn/Gln) amidotransferase subunit C (Campylobacter jejuni subsp. jejuni serotype O:6 (strain 81116 / NCTC 11828)).